The primary structure comprises 318 residues: L-malyl-CoA/beta-methylmalyl-CoA lyase (318 aa).

Positions 19, 24, 30, and 76 each coordinate substrate. Mg(2+) is bound by residues glutamate 141 and aspartate 168. Substrate contacts are provided by residues 167 to 168 (AD) and 251 to 252 (IH).

This sequence belongs to the HpcH/HpaI aldolase family. As to quaternary structure, homohexamer. Dimer of trimers. Mg(2+) is required as a cofactor. It depends on Mn(2+) as a cofactor.

It catalyses the reaction (S)-malyl-CoA = glyoxylate + acetyl-CoA. It carries out the reaction (2R,3S)-beta-methylmalyl-CoA = propanoyl-CoA + glyoxylate. With respect to regulation, in vitro inhibited by EDTA. Its function is as follows. Involved in the ethylmalonyl-CoA pathway for acetate assimilation. Catalyzes the reversible condensation of glyoxylate and acetyl-CoA to L-malyl-CoA and the reversible condensation of glyoxylate and propionyl-CoA to beta-methylmalyl-CoA. In Rhodobacter capsulatus (Rhodopseudomonas capsulata), this protein is L-malyl-CoA/beta-methylmalyl-CoA lyase.